A 561-amino-acid chain; its full sequence is Glutamate--tRNA ligase (561 aa).

The 'HIGH' region motif lies at 107–117 (PNPSGPLHLGH).

Belongs to the class-I aminoacyl-tRNA synthetase family. Glutamate--tRNA ligase type 2 subfamily.

The protein localises to the cytoplasm. It catalyses the reaction tRNA(Glu) + L-glutamate + ATP = L-glutamyl-tRNA(Glu) + AMP + diphosphate. In terms of biological role, catalyzes the attachment of glutamate to tRNA(Glu) in a two-step reaction: glutamate is first activated by ATP to form Glu-AMP and then transferred to the acceptor end of tRNA(Glu). The chain is Glutamate--tRNA ligase from Methanospirillum hungatei JF-1 (strain ATCC 27890 / DSM 864 / NBRC 100397 / JF-1).